The primary structure comprises 101 residues: Small ribosomal subunit protein uS14 (101 aa).

Belongs to the universal ribosomal protein uS14 family. Part of the 30S ribosomal subunit. Contacts proteins S3 and S10.

Functionally, binds 16S rRNA, required for the assembly of 30S particles and may also be responsible for determining the conformation of the 16S rRNA at the A site. The chain is Small ribosomal subunit protein uS14 from Hahella chejuensis (strain KCTC 2396).